Reading from the N-terminus, the 411-residue chain is MAVKVNEYYSLIQNNYLFVEIARRVDEYQKENPDANLIKMGIGDVTRPLAKSVVEAFKRAVDELGDADTFRGYGPEQGYDFLIEDVIENDYKPLGVELKNSEVFISDGAKCDTGNFQELFSKDNIIAVTDPVYPVYVDSNVMAGRSGKMGEDGFYENIVYLPATSENDFVPSLPSEKVDIIYLCYPNNPTGTTLTKEQLKEWVDYAHENDALILFDAAYESFIKTPGIPHSIFEIEGAKDVAVEFRSYSKVAGFTGTRCAYCVVPEEVYVKDANGNKVQLNPLWNRRQSTKFNGVSYPVQRAAQAIYTPEGKKEIQENLDYYVKNAQVIRESLEKMGLKVYGGVDSPYIWFKTPNDIDSWSFFDILLKEAHVVSTPGAGFGPSGEGYLRLTAFNTYENTVEAMDRISKLEF.

Substrate contacts are provided by Y16 and G43. Pyridoxal 5'-phosphate-binding positions include Y73, 109-110 (AK), Y133, N188, Y219, and 247-249 (SYS). Substrate contacts are provided by K110, Y133, and N188. Position 250 is an N6-(pyridoxal phosphate)lysine (K250). Pyridoxal 5'-phosphate is bound by residues R258 and N293. The substrate site is built by N293 and R389.

The protein belongs to the class-I pyridoxal-phosphate-dependent aminotransferase family. LL-diaminopimelate aminotransferase subfamily. In terms of assembly, homodimer. Requires pyridoxal 5'-phosphate as cofactor.

The catalysed reaction is (2S,6S)-2,6-diaminopimelate + 2-oxoglutarate = (S)-2,3,4,5-tetrahydrodipicolinate + L-glutamate + H2O + H(+). Its pathway is amino-acid biosynthesis; L-lysine biosynthesis via DAP pathway; LL-2,6-diaminopimelate from (S)-tetrahydrodipicolinate (aminotransferase route): step 1/1. In terms of biological role, involved in the synthesis of meso-diaminopimelate (m-DAP or DL-DAP), required for both lysine and peptidoglycan biosynthesis. Catalyzes the direct conversion of tetrahydrodipicolinate to LL-diaminopimelate. The sequence is that of LL-diaminopimelate aminotransferase from Methanosphaera stadtmanae (strain ATCC 43021 / DSM 3091 / JCM 11832 / MCB-3).